The following is a 142-amino-acid chain: Large ribosomal subunit protein uL13 (142 aa).

This sequence belongs to the universal ribosomal protein uL13 family. Part of the 50S ribosomal subunit.

Functionally, this protein is one of the early assembly proteins of the 50S ribosomal subunit, although it is not seen to bind rRNA by itself. It is important during the early stages of 50S assembly. The chain is Large ribosomal subunit protein uL13 from Pseudomonas putida (strain W619).